A 435-amino-acid polypeptide reads, in one-letter code: Adenylosuccinate synthetase (435 aa).

GTP contacts are provided by residues 11-17 and 39-41; these read GDEGKGK and GHT. D12 functions as the Proton acceptor in the catalytic mechanism. Mg(2+) contacts are provided by D12 and G39. Residues 12-15, 37-40, T128, R142, Q223, T238, and R302 contribute to the IMP site; these read DEGK and NAGH. H40 serves as the catalytic Proton donor. Residue 298–304 coordinates substrate; it reads SVTGRPR. GTP is bound by residues R304, 330–332, and 412–414; these read KLD and STG.

This sequence belongs to the adenylosuccinate synthetase family. Homodimer. The cofactor is Mg(2+).

Its subcellular location is the cytoplasm. The catalysed reaction is IMP + L-aspartate + GTP = N(6)-(1,2-dicarboxyethyl)-AMP + GDP + phosphate + 2 H(+). It participates in purine metabolism; AMP biosynthesis via de novo pathway; AMP from IMP: step 1/2. Functionally, plays an important role in the de novo pathway of purine nucleotide biosynthesis. Catalyzes the first committed step in the biosynthesis of AMP from IMP. This Coxiella burnetii (strain Dugway 5J108-111) protein is Adenylosuccinate synthetase.